A 441-amino-acid polypeptide reads, in one-letter code: GTPase Der (441 aa).

EngA-type G domains lie at 4–168 and 177–352; these read PVVA…PEDI and IRIA…EQNS. GTP contacts are provided by residues 10-17, 57-61, 121-124, 183-190, 230-234, and 295-298; these read GRPNVGKS, DTGGI, NKVE, DTAGM, and NKWD. Residues 353-437 form the KH-like domain; it reads TRVATATLNT…PIRMIVRQKD (85 aa).

Belongs to the TRAFAC class TrmE-Era-EngA-EngB-Septin-like GTPase superfamily. EngA (Der) GTPase family. Associates with the 50S ribosomal subunit.

Its function is as follows. GTPase that plays an essential role in the late steps of ribosome biogenesis. The chain is GTPase Der from Desulfitobacterium hafniense (strain Y51).